The chain runs to 315 residues: MQKPWVEKYRPENLDEVVGHQEIIKRLKNYVEKKSMPHLLFSGSPGVGKTTAALCLAKDLYGNTWKENFLELNSSDERGIDVIRTKVKDFARTKPIGDAPFKVIFLDESDALTSDAQNALRRTMEKYSDICRFVLSCNYPSKIIPPIQSRCAIFRFSPLKTEDLVKNLKEISEKESINVEKSGMDAIIYVSEGDMRKAINVLQTGAAVSKNINETVIYKVASKARPDEIKKMTELALNGKFVEAREQLYKLMIDWGMSGEDIIIQIFREVPNLEISEKEKVHLVEAIGECDFRIVEGANERIQLSALLAKMGILE.

Gly43–Thr50 contacts ATP.

The protein belongs to the activator 1 small subunits family. RfcS subfamily. Heteromultimer composed of small subunits (RfcS) and large subunits (RfcL).

In terms of biological role, part of the RFC clamp loader complex which loads the PCNA sliding clamp onto DNA. The protein is Replication factor C small subunit of Methanococcus vannielii (strain ATCC 35089 / DSM 1224 / JCM 13029 / OCM 148 / SB).